The chain runs to 176 residues: MTTIVSVRRNGQVVIGGDGQATLGNTVMKGNVRKVRRLYHDRVIAGFAGGTADAFTLFELFERKLELHQGHLVKAAVELAKDWRTDRMLRRLEALLAVADENASLIITGNGDVVQPENDLIAIGSGGPYAQAAARALLENTELGARDIVEKSLGIAGDICIYTNQFHTIEELASKA.

Residue T2 is part of the active site. Positions 157, 160, and 163 each coordinate Na(+).

This sequence belongs to the peptidase T1B family. HslV subfamily. In terms of assembly, a double ring-shaped homohexamer of HslV is capped on each side by a ring-shaped HslU homohexamer. The assembly of the HslU/HslV complex is dependent on binding of ATP.

It is found in the cytoplasm. It carries out the reaction ATP-dependent cleavage of peptide bonds with broad specificity.. Allosterically activated by HslU binding. Protease subunit of a proteasome-like degradation complex believed to be a general protein degrading machinery. The chain is ATP-dependent protease subunit HslV from Pectobacterium atrosepticum (strain SCRI 1043 / ATCC BAA-672) (Erwinia carotovora subsp. atroseptica).